Consider the following 904-residue polypeptide: Disks large homolog 1 (904 aa).

The L27 domain occupies 4-64 (RKQDTQRALH…FYEVTLLDNP (61 aa)). The residue at position 115 (threonine 115) is a Phosphothreonine. Phosphoserine is present on residues serine 122, serine 138, and serine 158. Residues 162–212 (PTEAVLPSPPTVPVIPVLPVPAENTVILPTIPQANPPPVLVNTDSLETPTY) form an interaction with SH3 domains region. 3 consecutive PDZ domains span residues 224–310 (EITL…VKRR), 319–405 (EIKL…VAKP), and 466–546 (KVVL…AQYR). The interval 224–546 (EITLERGNSG…QAVTIVAQYR (323 aa)) is required for interaction with MARCHF2. The residue at position 232 (serine 232) is a Phosphoserine. Residue tyrosine 399 is modified to Phosphotyrosine. A phosphoserine mark is found at serine 568, serine 573, serine 575, serine 579, serine 598, serine 619, serine 676, serine 684, serine 687, glutamine 709, and serine 834. Residues 581–651 (KRSLYVRALF…PSKRRVEKKE (71 aa)) enclose the SH3 domain. Residues 662–693 (SKTRDKGEIPDDMGSKGLKHVTSNASDSESSY) are disordered. The segment covering 682-693 (VTSNASDSESSY) has biased composition (polar residues). Positions 714 to 889 (TRPVIILGPM…IYNQVKQIIE (176 aa)) constitute a Guanylate kinase-like domain.

It belongs to the MAGUK family. Homotetramer. Interacts (via guanylate kinase-like domain) with DLGAP1, DLGAP2, DLGAP3, DLGAP4 and MAP1A. Interacts (via guanylate kinase-like domain) with KIF13B. May interact with HTR2A. Interacts (via PDZ domains) with GRIA1. Interacts (via PDZ domains) with GRIN2A. Interacts (via PDZ domains) with KCND2 and KCND3. Interacts (via PDZ domains) with KCNA1, KCNA2, KCNA3 and KCNA4. Interacts (via PDZ domains) with ADGRA3. Interacts with KCNF1. Interacts with CAMK2. Interacts with cytoskeleton-associated protein EPB41. Interacts with cytoskeleton-associated protein EZR. Found in a complex with KCNA5 and CAV3. Found in a complex with APC and CTNNB1. Interacts (via PDZ domains) with APC. Interacts with CDH1 through binding to PIK3R1. Forms multiprotein complexes with CASK, LIN7A, LIN7B, LIN7C, APBA1, and KCNJ12. Interacts with TOPK. Forms a tripartite complex composed of DLG1, MPP7 and LIN7 (LIN7A or LIN7C). May interact with TJAP1. Interacts with PTEN. Interacts with FRMPD4 (via C-terminus). Interacts with LRFN1, LRFN2 and LRFN4. Interacts with SFPQ. Interacts (via PDZ domains) with ADGRA2 (via PDZ-binding motif). Interacts with ADAM10; this interaction recruits ADAM10 to the cell membrane during long-term depression in hippocampal neurons. Interacts with DGKI (via PDZ-binding motif). Interacts (via PDZ domains) with MARCHF2 (via PDZ domain); the interaction leads to DLG1 ubiqtuitination and degradation. Interacts (via N-terminus) with MPP3; this interaction connects CADM1 with DLG1 and links CADM1 with the regulatory subunit of phosphoinositide-3-kinase (PI3K) by forming a multiprotein complex and participates in cell spreading. In terms of assembly, (Microbial infection) Interacts with HTLV-1 protein Tax. As to quaternary structure, (Microbial infection) Interacts (via PDZ domains 1 and 2) with influenza A virus protein NS1; the interaction results in the translocation of DLG1 from the cell membrane to perinuclear puncta. Acts as a scaffold protein to facilitate the interaction between LIN7C and influenza A virus protein NS1; the interaction facilitates translocation of LIN7C to cytoplasmic puncta. (Microbial infection) Interacts with human papillomavirus 18/HPV-18 protein E6. In terms of processing, phosphorylated by MAPK12. Phosphorylation of Ser-232 regulates association with GRIN2A. Post-translationally, ubiquitinated; by MARCHF2 which results in its degradation. In terms of tissue distribution, abundantly expressed in atrial myocardium (at protein level). Expressed in lung fibroblasts, cervical epithelial and B-cells (at protein level). Expressed in the brain (at protein level). Widely expressed, with isoforms displaying different expression profiles.

The protein resides in the cell membrane. It is found in the basolateral cell membrane. The protein localises to the endoplasmic reticulum membrane. Its subcellular location is the postsynaptic density. It localises to the synapse. The protein resides in the sarcolemma. It is found in the apical cell membrane. The protein localises to the cell junction. Its subcellular location is the cytoplasm. Essential multidomain scaffolding protein required for normal development. Recruits channels, receptors and signaling molecules to discrete plasma membrane domains in polarized cells. Promotes epithelial cell layer barrier function via maintaining cell-cell adhesion. May also play a role in adherens junction assembly, signal transduction, cell proliferation, synaptogenesis and lymphocyte activation. Regulates the excitability of cardiac myocytes by modulating the functional expression of Kv4 channels. Functional regulator of Kv1.5 channel. During long-term depression in hippocampal neurons, it recruits ADAM10 to the plasma membrane. The chain is Disks large homolog 1 from Homo sapiens (Human).